The primary structure comprises 279 residues: MADS-box transcription factor PHERES 1 (279 aa).

Positions M1–R60 constitute an MADS-box domain.

Interacts with AGL61/DIANA and AGL62. Male gametophyte, embryo and endosperm.

The protein localises to the nucleus. Its function is as follows. Probable transcription factor involved in the development of gametophytes and seeds. The polypeptide is MADS-box transcription factor PHERES 1 (PHE1) (Arabidopsis thaliana (Mouse-ear cress)).